Reading from the N-terminus, the 374-residue chain is Quinolinate synthase (374 aa).

Residues His-53 and Ser-70 each contribute to the iminosuccinate site. Residue Cys-116 participates in [4Fe-4S] cluster binding. Iminosuccinate is bound by residues 148–150 (YMN) and Ser-169. Cys-236 serves as a coordination point for [4Fe-4S] cluster. Residues 262 to 264 (HPE) and Thr-279 contribute to the iminosuccinate site. Position 327 (Cys-327) interacts with [4Fe-4S] cluster.

It belongs to the quinolinate synthase family. Type 3 subfamily. It depends on [4Fe-4S] cluster as a cofactor.

It localises to the cytoplasm. The catalysed reaction is iminosuccinate + dihydroxyacetone phosphate = quinolinate + phosphate + 2 H2O + H(+). Its pathway is cofactor biosynthesis; NAD(+) biosynthesis; quinolinate from iminoaspartate: step 1/1. Its function is as follows. Catalyzes the condensation of iminoaspartate with dihydroxyacetone phosphate to form quinolinate. This Halobacterium salinarum (strain ATCC 29341 / DSM 671 / R1) protein is Quinolinate synthase.